The primary structure comprises 298 residues: ATP phosphoribosyltransferase (298 aa).

This sequence belongs to the ATP phosphoribosyltransferase family. Long subfamily. Mg(2+) is required as a cofactor.

The protein localises to the cytoplasm. It catalyses the reaction 1-(5-phospho-beta-D-ribosyl)-ATP + diphosphate = 5-phospho-alpha-D-ribose 1-diphosphate + ATP. It functions in the pathway amino-acid biosynthesis; L-histidine biosynthesis; L-histidine from 5-phospho-alpha-D-ribose 1-diphosphate: step 1/9. With respect to regulation, feedback inhibited by histidine. In terms of biological role, catalyzes the condensation of ATP and 5-phosphoribose 1-diphosphate to form N'-(5'-phosphoribosyl)-ATP (PR-ATP). Has a crucial role in the pathway because the rate of histidine biosynthesis seems to be controlled primarily by regulation of HisG enzymatic activity. The chain is ATP phosphoribosyltransferase from Aliivibrio salmonicida (strain LFI1238) (Vibrio salmonicida (strain LFI1238)).